The primary structure comprises 64 residues: Large ribosomal subunit protein bL28 (64 aa).

Residues 1-27 (MAKRDQLTGKGPLSGNTRSHAMNHSKR) form a disordered region.

Belongs to the bacterial ribosomal protein bL28 family.

The protein is Large ribosomal subunit protein bL28 of Ureaplasma parvum serovar 3 (strain ATCC 27815 / 27 / NCTC 11736).